The sequence spans 234 residues: Ubiquitin thioesterase OTUB2 (234 aa).

One can recognise an OTU domain in the interval 40-231 (TSIRKTKGDG…TSHYNILYAA (192 aa)). Residue Asp-48 is part of the active site. Cys-51 acts as the Nucleophile in catalysis. Residues His-205 and His-224 contribute to the active site.

Belongs to the peptidase C65 family.

It catalyses the reaction Thiol-dependent hydrolysis of ester, thioester, amide, peptide and isopeptide bonds formed by the C-terminal Gly of ubiquitin (a 76-residue protein attached to proteins as an intracellular targeting signal).. In terms of biological role, hydrolase that can remove conjugated ubiquitin from proteins in vitro and may therefore play an important regulatory role at the level of protein turnover by preventing degradation. Mediates deubiquitination of 'Lys-11'-,'Lys-48'- and 'Lys-63'-linked polyubiquitin chains, with a preference for 'Lys-63'-linked polyubiquitin chains. In Mus musculus (Mouse), this protein is Ubiquitin thioesterase OTUB2 (Otub2).